The sequence spans 538 residues: Phosphoenolpyruvate carboxykinase (ATP) (538 aa).

A substrate-binding site is contributed by R64. R152 contributes to the ATP binding site. Positions 205 and 211 each coordinate substrate. Residues K211, H230, and 246-254 (GLSGTGKTT) each bind ATP. Mn(2+) contacts are provided by K211 and H230. Residue D267 participates in Mn(2+) binding. Residues E295, R331, R344, 447-448 (RI), and T453 each bind ATP. A substrate-binding site is contributed by R331.

This sequence belongs to the phosphoenolpyruvate carboxykinase (ATP) family. Monomer. The cofactor is Mn(2+).

The protein resides in the cytoplasm. The catalysed reaction is oxaloacetate + ATP = phosphoenolpyruvate + ADP + CO2. It participates in carbohydrate biosynthesis; gluconeogenesis. Its function is as follows. Involved in gluconeogenesis. Catalyzes the conversion of oxaloacetate (OAA) to phosphoenolpyruvate (PEP) through direct phosphoryl transfer between the nucleoside triphosphate and OAA. The sequence is that of Phosphoenolpyruvate carboxykinase (ATP) from Actinobacillus succinogenes (strain ATCC 55618 / DSM 22257 / CCUG 43843 / 130Z).